The chain runs to 466 residues: Cysteine--tRNA ligase (466 aa).

Cys-29 contacts Zn(2+). Residues 31–41 (ATVQAPPHIGH) carry the 'HIGH' region motif. Cys-211, His-236, and Glu-240 together coordinate Zn(2+). Residues 267-271 (KMSKS) carry the 'KMSKS' region motif. Residue Lys-270 participates in ATP binding.

It belongs to the class-I aminoacyl-tRNA synthetase family. As to quaternary structure, monomer. It depends on Zn(2+) as a cofactor.

The protein resides in the cytoplasm. The catalysed reaction is tRNA(Cys) + L-cysteine + ATP = L-cysteinyl-tRNA(Cys) + AMP + diphosphate. This is Cysteine--tRNA ligase from Thermobifida fusca (strain YX).